We begin with the raw amino-acid sequence, 563 residues long: RUN and FYVE domain-containing protein 4 (563 aa).

Positions 33–166 constitute an RUN domain; the sequence is TETSAELHRL…VAFNLDLQRP (134 aa). Disordered regions lie at residues 176 to 327 and 375 to 397; these read SESR…TTEG and KKSS…MQED. 2 stretches are compositionally biased toward basic and acidic residues: residues 196-205 and 263-284; these read GFPEEVRCSR and ETER…RKFL. A compositionally biased stretch (polar residues) spans 285 to 295; the sequence is ENSTASIQQQR. Positions 297-312 are enriched in basic and acidic residues; sequence RAKDVKMQLTGRKVEG. Residues 385–396 show a composition bias toward polar residues; sequence EWTGVTSGTMQE. Residues 421–462 are a coiled coil; the sequence is QAQCQEQLRAQEAELQALQEQLSRCQKERALLQVKLEQKQQE. An FYVE-type zinc finger spans residues 428 to 558; the sequence is LRAQEAELQA…RCCPTCAQQE (131 aa). Zn(2+) contacts are provided by Cys513, Cys516, Cys529, Cys532, Cys537, Cys540, Cys551, and Cys554.

In terms of assembly, forms homodimers (via coiled coil domain). Forms a ternary complex with RAB7A and LAMP2; the interaction with RAB7A is mediated by RUFY4 (via RUN and coiled coil domains). Interacts with GTP-, but not GDP-bound ARL8A and ARL8B. Interacts with dynactin/DCTN1 and the dynein intermediate chain DYNC1I1/2. As to expression, expressed in dendritic cells.

The protein resides in the cytoplasmic vesicle. It localises to the autophagosome. The protein localises to the lysosome. Functionally, ARL8 effector that promotes the coupling of endolysosomes to dynein-dynactin for retrograde transport along microtubules. Acts by binding both GTP-bound ARL8 and dynein-dynactin. In nonneuronal cells, promotes concentration of endolysosomes in the juxtanuclear area. In hippocampal neurons, drives retrograde transport of endolysosomes from the axon to the soma. Positive regulator of macroautophagy in dendritic cells. Increases autophagic flux, probably by stimulating both autophagosome formation and facilitating tethering with lysosomes. Binds to phosphatidylinositol 3-phosphate (PtdIns3P) through its FYVE-type zinc finger. Positive regulator of osteosclast bone-resorbing activity, possibly by promoting late endosome-lysosome fusion by acting as an adapter protein between RAB7A on late endosomes and LAMP2 on primary lysosomes. This Mus musculus (Mouse) protein is RUN and FYVE domain-containing protein 4 (Rufy4).